The chain runs to 229 residues: Large ribosomal subunit protein uL1 (229 aa).

Belongs to the universal ribosomal protein uL1 family. As to quaternary structure, part of the 50S ribosomal subunit.

In terms of biological role, binds directly to 23S rRNA. The L1 stalk is quite mobile in the ribosome, and is involved in E site tRNA release. Protein L1 is also a translational repressor protein, it controls the translation of the L11 operon by binding to its mRNA. The polypeptide is Large ribosomal subunit protein uL1 (Actinobacillus pleuropneumoniae serotype 5b (strain L20)).